We begin with the raw amino-acid sequence, 2058 residues long: Unconventional myosin-X (2058 aa).

Position 1 is an N-acetylmethionine (Met-1). Residues 63-739 form the Myosin motor domain; it reads EGVDDMASLT…LEQKLEKRRE (677 aa). Residues Asn-104, Tyr-113, 160–165, and Asn-215 contribute to the ATP site; that span reads GAGKTE. Positions 619-641 are actin-binding; that stretch reads LHSLMATLSSSNPFFVRCIKPNM. IQ domains are found at residues 742 to 763, 764 to 787, and 788 to 817; these read VSHAAMVIRAHVLGFLARKQYR, KVLYCVVIIQKNYRAFLLRRRFLH, and LKKAAIVFQKQLRGQIARRVYRQLLAEKRE. Positions 814-883 are SAH; it reads EKREQEEKKK…LTRELEKQKE (70 aa). Disordered regions lie at residues 819–840 and 847–866; these read EEKKKQEEEEKKKREEEERERE and ELRAQQEEETRKQQELEALQ. Residues 847–861 are compositionally biased toward basic and acidic residues; that stretch reads ELRAQQEEETRKQQE. Residues 884–934 are a coiled coil; the sequence is NKQVEEILRLEKEIEDLQRMKEQQELSLTEASLQKLQERRDQELRRLEEEA. 3 positions are modified to phosphoserine: Ser-962, Ser-965, and Ser-968. A disordered region spans residues 964–1090; it reads GSEFSSELAE…DLPSPDGDYD (127 aa). The segment covering 989–1003 has biased composition (acidic residues); sequence PEEEVDEGFEADDDA. The span at 1040–1049 shows a compositional bias: polar residues; it reads VVPTSPSADS. Low complexity predominate over residues 1060–1071; it reads SGSLHNSSSGES. The residue at position 1158 (Thr-1158) is a Phosphothreonine. PH domains follow at residues 1212 to 1310 and 1392 to 1497; these read EALK…QVHA and EFIV…NVTD. Residues 1547–1695 enclose the MyTH4 domain; that stretch reads LPYGDINLNL…PSRDEIEALI (149 aa). The 345-residue stretch at 1700-2044 folds into the FERM domain; that stretch reads MTSTVYCHGG…AYISMIVKKR (345 aa).

This sequence belongs to the TRAFAC class myosin-kinesin ATPase superfamily. Myosin family. As to quaternary structure, monomer, when in an inactive conformation in the cytosol. Homodimer in its active, membrane-bound conformation; antiparallel coiled coil-mediated dimer formation. Interacts strongly with CALM3 and weakly with CALM, the CALM3 interaction is essential for function in filopodial extension and motility. Interacts with ECPAS. Interacts with NEO1. Interacts with ITGB1 and ITGB3. Interacts with VASP. Interacts with DCC and ITGB5; the presence of DCC inhibits ITGB5 binding. Interacts with tubulin; ITGB5 or DCC binding inhibits tubulin binding. In terms of processing, the initiator methionine for isoform Headless is removed. In terms of tissue distribution, ubiquitous.

It is found in the cytoplasm. Its subcellular location is the cytosol. The protein resides in the cell projection. It localises to the lamellipodium. The protein localises to the ruffle. It is found in the cytoskeleton. Its subcellular location is the filopodium tip. The protein resides in the cell cortex. It localises to the filopodium membrane. Myosins are actin-based motor molecules with ATPase activity. Unconventional myosins serve in intracellular movements. MYO10 binds to actin filaments and actin bundles and functions as a plus end-directed motor. Moves with higher velocity and takes larger steps on actin bundles than on single actin filaments. The tail domain binds to membranous compartments containing phosphatidylinositol 3,4,5-trisphosphate or integrins, and mediates cargo transport along actin filaments. Regulates cell shape, cell spreading and cell adhesion. Stimulates the formation and elongation of filopodia. In hippocampal neurons it induces the formation of dendritic filopodia by trafficking the actin-remodeling protein VASP to the tips of filopodia, where it promotes actin elongation. Plays a role in formation of the podosome belt in osteoclasts. In terms of biological role, functions as a dominant-negative regulator of isoform 1, suppressing its filopodia-inducing and axon outgrowth-promoting activities. In hippocampal neurons, it increases VASP retention in spine heads to induce spine formation and spine head expansion. The polypeptide is Unconventional myosin-X (MYO10) (Homo sapiens (Human)).